We begin with the raw amino-acid sequence, 361 residues long: Histidinol-phosphate aminotransferase (361 aa).

K223 is subject to N6-(pyridoxal phosphate)lysine.

This sequence belongs to the class-II pyridoxal-phosphate-dependent aminotransferase family. Histidinol-phosphate aminotransferase subfamily. In terms of assembly, homodimer. The cofactor is pyridoxal 5'-phosphate.

The catalysed reaction is L-histidinol phosphate + 2-oxoglutarate = 3-(imidazol-4-yl)-2-oxopropyl phosphate + L-glutamate. It participates in amino-acid biosynthesis; L-histidine biosynthesis; L-histidine from 5-phospho-alpha-D-ribose 1-diphosphate: step 7/9. The polypeptide is Histidinol-phosphate aminotransferase (Deinococcus radiodurans (strain ATCC 13939 / DSM 20539 / JCM 16871 / CCUG 27074 / LMG 4051 / NBRC 15346 / NCIMB 9279 / VKM B-1422 / R1)).